Here is a 145-residue protein sequence, read N- to C-terminus: Alpha-amylase/trypsin inhibitor CM1 (145 aa).

A signal peptide spans 1 to 25 (MASKSSISPLLLATVLVSVFAAATA).

Belongs to the protease inhibitor I6 (cereal trypsin/alpha-amylase inhibitor) family. Subunit of the tetrameric inhibitor. In terms of tissue distribution, endosperm.

It localises to the secreted. Its function is as follows. Alpha-amylase/trypsin inhibitor. It could be involved in insect defense mechanisms. In Triticum aestivum (Wheat), this protein is Alpha-amylase/trypsin inhibitor CM1.